The chain runs to 244 residues: 1-(5-phosphoribosyl)-5-[(5-phosphoribosylamino)methylideneamino] imidazole-4-carboxamide isomerase (244 aa).

The active-site Proton acceptor is Asp8. Catalysis depends on Asp129, which acts as the Proton donor.

Belongs to the HisA/HisF family.

Its subcellular location is the cytoplasm. The enzyme catalyses 1-(5-phospho-beta-D-ribosyl)-5-[(5-phospho-beta-D-ribosylamino)methylideneamino]imidazole-4-carboxamide = 5-[(5-phospho-1-deoxy-D-ribulos-1-ylimino)methylamino]-1-(5-phospho-beta-D-ribosyl)imidazole-4-carboxamide. The protein operates within amino-acid biosynthesis; L-histidine biosynthesis; L-histidine from 5-phospho-alpha-D-ribose 1-diphosphate: step 4/9. This chain is 1-(5-phosphoribosyl)-5-[(5-phosphoribosylamino)methylideneamino] imidazole-4-carboxamide isomerase, found in Geobacter sulfurreducens (strain ATCC 51573 / DSM 12127 / PCA).